The sequence spans 525 residues: GMP synthase [glutamine-hydrolyzing] (525 aa).

The region spanning 9 to 207 is the Glutamine amidotransferase type-1 domain; sequence RILILDFGSQ…VRDICQCEAL (199 aa). Catalysis depends on Cys86, which acts as the Nucleophile. Residues His181 and Glu183 contribute to the active site. Residues 208 to 400 form the GMPS ATP-PPase domain; it reads WTPAKIIDDA…LGLPYDMLYR (193 aa). 235-241 is a binding site for ATP; the sequence is SGGVDSS.

In terms of assembly, homodimer.

It carries out the reaction XMP + L-glutamine + ATP + H2O = GMP + L-glutamate + AMP + diphosphate + 2 H(+). It participates in purine metabolism; GMP biosynthesis; GMP from XMP (L-Gln route): step 1/1. Catalyzes the synthesis of GMP from XMP. This is GMP synthase [glutamine-hydrolyzing] from Klebsiella pneumoniae (strain 342).